A 295-amino-acid polypeptide reads, in one-letter code: Ribosomal protein L11 methyltransferase (295 aa).

Residues Thr-145, Gly-166, Asp-188, and Asn-230 each coordinate S-adenosyl-L-methionine.

Belongs to the methyltransferase superfamily. PrmA family.

Its subcellular location is the cytoplasm. It catalyses the reaction L-lysyl-[protein] + 3 S-adenosyl-L-methionine = N(6),N(6),N(6)-trimethyl-L-lysyl-[protein] + 3 S-adenosyl-L-homocysteine + 3 H(+). Methylates ribosomal protein L11. In Pectobacterium carotovorum subsp. carotovorum (strain PC1), this protein is Ribosomal protein L11 methyltransferase.